Reading from the N-terminus, the 310-residue chain is UPF0761 membrane protein VFMJ11_0098 (310 aa).

Helical transmembrane passes span 34-54 (YMAYITLLSLVPLITVLLSVL), 97-117 (MTAVGSGFLFVASVMLISSID), 136-156 (FSLYWMILTLGPLLVGASLAA), 178-198 (LLGWLPIILSFSAFVGLYLLV), 207-227 (HALIGAMSAGCLFEFSKVGFA), and 242-262 (ALAAVPILFVWVYLCWIIVLI).

This sequence belongs to the UPF0761 family.

It is found in the cell inner membrane. The polypeptide is UPF0761 membrane protein VFMJ11_0098 (Aliivibrio fischeri (strain MJ11) (Vibrio fischeri)).